Here is a 61-residue protein sequence, read N- to C-terminus: Large ribosomal subunit protein eL24 (61 aa).

Zn(2+)-binding residues include cysteine 7, cysteine 10, cysteine 33, and cysteine 37. A C4-type zinc finger spans residues 7 to 37; that stretch reads CTYCGRSIEPGTGLMYVKNDGSVLWFCSSKC.

This sequence belongs to the eukaryotic ribosomal protein eL24 family. As to quaternary structure, part of the 50S ribosomal subunit. Forms a cluster with proteins L3 and L14. The cofactor is Zn(2+).

In terms of biological role, binds to the 23S rRNA. This Hyperthermus butylicus (strain DSM 5456 / JCM 9403 / PLM1-5) protein is Large ribosomal subunit protein eL24.